Reading from the N-terminus, the 286-residue chain is MGRARPKSQKRGDYRVSRSQENAAELPKKKFYRQRAHANPFSDHHLVYPACPDEMDWTLYYPAFPTQGETLPNHIFTHNQSCMRISDSTRSGSLQKNIEVVDIGCGFGGLLVALAPLMPETLALGLEIRTSVTEYVQEKIRALRAQNEGTGLYQNIGCIRANSMKFLPNFLRKSQLSKIFICFPDPHFKARKHKARIVSATLNSEYAFALRPGGIVYTITDVEPLHQWMAEHFVAHPSFERLSQEEEEADECVQVMKSETEEGRKVTRNQGQKFVALFRRIEDPPW.

Residues 1-22 (MGRARPKSQKRGDYRVSRSQEN) form a disordered region. S-adenosyl-L-methionine is bound by residues G104, 127–128 (EI), 162–163 (NS), and C182. The active site involves D185. 260-262 (TEE) is a binding site for S-adenosyl-L-methionine.

The protein belongs to the class I-like SAM-binding methyltransferase superfamily. TrmB family. As to quaternary structure, forms a complex with TRM82.

It localises to the nucleus. It carries out the reaction guanosine(46) in tRNA + S-adenosyl-L-methionine = N(7)-methylguanosine(46) in tRNA + S-adenosyl-L-homocysteine. It functions in the pathway tRNA modification; N(7)-methylguanine-tRNA biosynthesis. In terms of biological role, catalyzes the formation of N(7)-methylguanine at position 46 (m7G46) in tRNA. The sequence is that of tRNA (guanine-N(7)-)-methyltransferase from Colletotrichum orbiculare (strain 104-T / ATCC 96160 / CBS 514.97 / LARS 414 / MAFF 240422) (Cucumber anthracnose fungus).